The chain runs to 385 residues: Glucans biosynthesis protein C (385 aa).

The next 10 membrane-spanning stretches (helical) occupy residues 17–37 (AWLM…SHTW), 60–80 (MQVF…RYPL), 91–111 (VGIP…IMLQ), 137–157 (ISHL…VWIF), 173–193 (KFSM…YAVI), 212–232 (FIVM…LAFI), 239–259 (LFTT…VAYL), 274–294 (TESV…FSFG), 311–331 (ASLF…AYIT), and 338–358 (WLGF…LYEI).

Belongs to the acyltransferase 3 family. OpgC subfamily.

It is found in the cell membrane. The protein operates within glycan metabolism; osmoregulated periplasmic glucan (OPG) biosynthesis. In terms of biological role, necessary for the succinyl substitution of periplasmic glucans. Could catalyze the transfer of succinyl residues from the cytoplasmic side of the membrane to the nascent glucan backbones on the periplasmic side of the membrane. The protein is Glucans biosynthesis protein C of Escherichia coli O6:K15:H31 (strain 536 / UPEC).